Reading from the N-terminus, the 358-residue chain is Cilia- and flagella-associated protein 263 (358 aa).

Coiled-coil stretches lie at residues tyrosine 93–asparagine 138, arginine 176–glutamate 200, and arginine 266–serine 343.

Belongs to the CFAP263 family. Forms a complex with CFAP184; the interaction is required for functional activity in cilia. Interacts with HAP1 and PCM1.

The protein localises to the cytoplasm. Its subcellular location is the cytoskeleton. It localises to the microtubule organizing center. It is found in the centrosome. The protein resides in the centriolar satellite. The protein localises to the cell projection. Its subcellular location is the cilium. Its function is as follows. Component of centriolar satellites contributing to primary cilium formation. In complex with CFAP263, acts as a regulator of ciliary beating that connects radial spoke 3 (RS3) to the inner dynein arm (IDA) and the nexin-dynein regulatory complex (N-DRC). The complex is positioned parallel to N-DRC and forms a connection between the arch at the base of RS3, the IDA tail and N-DRC. This Danio rerio (Zebrafish) protein is Cilia- and flagella-associated protein 263 (cfap263).